The following is a 257-amino-acid chain: High affinity immunoglobulin epsilon receptor subunit alpha (257 aa).

An N-terminal signal peptide occupies residues 1-25 (MAPAMESPTLLCVALLFFAPDGVLA). Over 26–205 (VPQKPKVSLN…KAPREKYWLQ (180 aa)) the chain is Extracellular. Ig-like domains lie at 30 to 110 (PKVS…EVFS) and 111 to 193 (DWLL…LNIT). N-linked (GlcNAc...) asparagine glycosylation is found at N46, N67, N75, N99, N160, N165, and N191. The cysteines at positions 51 and 93 are disulfide-linked. C132 and C176 are oxidised to a cystine. A helical transmembrane segment spans residues 206-224 (FFIPLLVVILFAVDTGLFI). The Cytoplasmic segment spans residues 225–257 (STQQQVTFLLKIKRTRKGFRLLNPHPKPNPKNN).

In terms of assembly, tetramer of an alpha chain, a beta chain, and two disulfide linked gamma chains. Interacts with IGHE (via CH3 region). In terms of tissue distribution, expressed in eosinophils.

It is found in the cell membrane. In terms of biological role, high-affinity receptor for immunoglobulin epsilon/IgE. Mediates IgE effector functions in myeloid cells. Upon IgE binding and antigen/allergen cross-linking initiates signaling pathways that lead to myeloid cell activation and differentiation. On mast cells, basophils and eosinophils stimulates the secretion of vasoactive amines, lipid mediators and cytokines that contribute to inflammatory response, tissue remodeling and cytotoxicity against microbes. Triggers the immediate hypersensitivity response to allergens as a host defense mechanism against helminth parasites, pathogenic bacteria and venom toxicity. When dysregulated, it can elicit harmful life-threatening allergic and anaphylactic reactions. This Homo sapiens (Human) protein is High affinity immunoglobulin epsilon receptor subunit alpha (FCER1A).